A 273-amino-acid chain; its full sequence is Glutamate racemase (273 aa).

Substrate is bound by residues 9-10 and 41-42; these read DS and YG. Catalysis depends on Cys-73, which acts as the Proton donor/acceptor. 74-75 contributes to the substrate binding site; sequence NT. The active-site Proton donor/acceptor is Cys-183. 184–185 is a binding site for substrate; it reads TH.

The protein belongs to the aspartate/glutamate racemases family.

It carries out the reaction L-glutamate = D-glutamate. The protein operates within cell wall biogenesis; peptidoglycan biosynthesis. In terms of biological role, provides the (R)-glutamate required for cell wall biosynthesis. This Shewanella oneidensis (strain ATCC 700550 / JCM 31522 / CIP 106686 / LMG 19005 / NCIMB 14063 / MR-1) protein is Glutamate racemase.